The following is a 577-amino-acid chain: Torulene dioxygenase (577 aa).

The Fe(2+) site is built by His-239, His-291, His-361, and His-570.

This sequence belongs to the carotenoid oxygenase family. The cofactor is Fe(2+).

Its subcellular location is the cytoplasm. The protein localises to the cytosol. It carries out the reaction torulene + O2 = 4'-apo-beta-carotenal + 3-methyl-2-butenal. It functions in the pathway carotenoid biosynthesis. Functionally, torulene dioxygenase; part of the pathway that mediates the biosynthesis of neurosporaxanthin, a carboxylic apocarotenoid acting as an essential protective pigments and leading to orange pigmentation. CarT mediates the cleavage of torulene into beta-apo-4'-carotenal, the aldehyde corresponding to the acidic neurosporaxanthin. Is also active on other monocyclic synthetic substrates such as beta-apo-8'-carotenal and beta-apo-10'-carotenal to produce beta-apo-14'-carotenal and retinal(beta-apo-15'-carotenal), respectively. Neurosporaxanthin is synthesized from geranyl-geranyl pyrophosphate (GGPP) through several enzymatic activities. Phytoene synthase activity performed by the bifunctional enzyme carAR first produces phytoene from geranyl-geranyl pyrophosphate (GGPP). The phytoene dehydrogenase carB then introduces 4 desaturations to lead to lycopene which is substrate of the carotene cyclase activity of carAR that leads to the production of gamma-carotene. CarB then performs a 5th desaturation reaction to yield torulene. Torulene is the substrate of the dioxidase carT that breaks the molecule, removing five carbon atoms to yield beta-apo-4'-carotenal, whereas the aldehyde dehydrogenase carD mediates the last step by converting beta-apo-4'-carotenal into neurosporaxanthin. This Fusarium fujikuroi (Bakanae and foot rot disease fungus) protein is Torulene dioxygenase.